The chain runs to 575 residues: Flagellin A (575 aa).

3 consecutive repeat copies span residues 405 to 409, 411 to 415, and 447 to 450.

This sequence belongs to the bacterial flagellin family. Heteromer of flaA and flaB.

The protein localises to the secreted. The protein resides in the bacterial flagellum. Flagellin is the subunit protein which polymerizes to form the filaments of bacterial flagella. The sequence is that of Flagellin A (flaA) from Campylobacter jejuni.